A 302-amino-acid chain; its full sequence is Nucleotide-binding protein STH186 (302 aa).

G15–T22 contributes to the ATP binding site. Residue D66 to G69 participates in GTP binding.

It belongs to the RapZ-like family.

In terms of biological role, displays ATPase and GTPase activities. The chain is Nucleotide-binding protein STH186 from Symbiobacterium thermophilum (strain DSM 24528 / JCM 14929 / IAM 14863 / T).